A 264-amino-acid chain; its full sequence is Triosephosphate isomerase (264 aa).

Substrate is bound at residue Asn-13–Lys-15. Catalysis depends on His-106, which acts as the Electrophile. The active-site Proton acceptor is Glu-179. Residues Gly-185, Ser-223, and Gly-244–Gly-245 each bind substrate.

It belongs to the triosephosphate isomerase family. As to quaternary structure, homodimer.

It is found in the cytoplasm. It catalyses the reaction D-glyceraldehyde 3-phosphate = dihydroxyacetone phosphate. Its pathway is carbohydrate biosynthesis; gluconeogenesis. It functions in the pathway carbohydrate degradation; glycolysis; D-glyceraldehyde 3-phosphate from glycerone phosphate: step 1/1. In terms of biological role, involved in the gluconeogenesis. Catalyzes stereospecifically the conversion of dihydroxyacetone phosphate (DHAP) to D-glyceraldehyde-3-phosphate (G3P). The protein is Triosephosphate isomerase of Acinetobacter baumannii (strain SDF).